The sequence spans 719 residues: DNA ligase (719 aa).

Residues 42 to 46, 91 to 92, and Glu125 contribute to the NAD(+) site; these read DAEYD and SL. The active-site N6-AMP-lysine intermediate is Lys127. NAD(+) contacts are provided by Arg148, Glu184, Lys300, and Lys324. Positions 429, 432, 447, and 453 each coordinate Zn(2+). The BRCT domain occupies 638-719; that stretch reads TASSPIAEKI…WMRLIKGHNI (82 aa).

The protein belongs to the NAD-dependent DNA ligase family. LigA subfamily. Mg(2+) serves as cofactor. It depends on Mn(2+) as a cofactor.

The enzyme catalyses NAD(+) + (deoxyribonucleotide)n-3'-hydroxyl + 5'-phospho-(deoxyribonucleotide)m = (deoxyribonucleotide)n+m + AMP + beta-nicotinamide D-nucleotide.. Functionally, DNA ligase that catalyzes the formation of phosphodiester linkages between 5'-phosphoryl and 3'-hydroxyl groups in double-stranded DNA using NAD as a coenzyme and as the energy source for the reaction. It is essential for DNA replication and repair of damaged DNA. The polypeptide is DNA ligase (Bartonella tribocorum (strain CIP 105476 / IBS 506)).